The following is a 559-amino-acid chain: Potassium-transporting ATPase potassium-binding subunit (559 aa).

13 consecutive transmembrane segments (helical) span residues 5–25 (GFLL…PLGS), 27–47 (LARL…RILW), 63–83 (LLAL…LLFW), 132–152 (GLTV…FALI), 170–190 (LVRI…LFFI), 253–273 (LAQM…FGEA), 283–303 (LLWA…WAEV), 327–347 (FGVL…CGAV), 356–376 (ALGG…FGGV), 379–399 (GLYG…LMIG), 416–436 (MTAL…ALAM), 484–504 (LLAF…MAIA), and 524–544 (GALF…LTFI).

Belongs to the KdpA family. In terms of assembly, the system is composed of three essential subunits: KdpA, KdpB and KdpC.

The protein resides in the cell inner membrane. Functionally, part of the high-affinity ATP-driven potassium transport (or Kdp) system, which catalyzes the hydrolysis of ATP coupled with the electrogenic transport of potassium into the cytoplasm. This subunit binds the periplasmic potassium ions and delivers the ions to the membrane domain of KdpB through an intramembrane tunnel. In Salmonella choleraesuis (strain SC-B67), this protein is Potassium-transporting ATPase potassium-binding subunit.